The primary structure comprises 194 residues: Xanthine phosphoribosyltransferase (194 aa).

Leu20 and Asn27 together coordinate xanthine. 128–132 (ANGCA) contributes to the 5-phospho-alpha-D-ribose 1-diphosphate binding site. Lys156 serves as a coordination point for xanthine.

This sequence belongs to the purine/pyrimidine phosphoribosyltransferase family. Xpt subfamily. In terms of assembly, homodimer.

Its subcellular location is the cytoplasm. The enzyme catalyses XMP + diphosphate = xanthine + 5-phospho-alpha-D-ribose 1-diphosphate. It participates in purine metabolism; XMP biosynthesis via salvage pathway; XMP from xanthine: step 1/1. Its function is as follows. Converts the preformed base xanthine, a product of nucleic acid breakdown, to xanthosine 5'-monophosphate (XMP), so it can be reused for RNA or DNA synthesis. The protein is Xanthine phosphoribosyltransferase of Lachnoclostridium phytofermentans (strain ATCC 700394 / DSM 18823 / ISDg) (Clostridium phytofermentans).